We begin with the raw amino-acid sequence, 130 residues long: Phosphoribosyl-AMP cyclohydrolase (130 aa).

D78 is a binding site for Mg(2+). C79 contributes to the Zn(2+) binding site. Mg(2+) is bound by residues D80 and D82. Residues C96 and C103 each coordinate Zn(2+).

This sequence belongs to the PRA-CH family. In terms of assembly, homodimer. Requires Mg(2+) as cofactor. Zn(2+) is required as a cofactor.

It localises to the cytoplasm. The catalysed reaction is 1-(5-phospho-beta-D-ribosyl)-5'-AMP + H2O = 1-(5-phospho-beta-D-ribosyl)-5-[(5-phospho-beta-D-ribosylamino)methylideneamino]imidazole-4-carboxamide. It functions in the pathway amino-acid biosynthesis; L-histidine biosynthesis; L-histidine from 5-phospho-alpha-D-ribose 1-diphosphate: step 3/9. Catalyzes the hydrolysis of the adenine ring of phosphoribosyl-AMP. This is Phosphoribosyl-AMP cyclohydrolase from Methylobacillus flagellatus (strain ATCC 51484 / DSM 6875 / VKM B-1610 / KT).